Reading from the N-terminus, the 30-residue chain is Varv peptide B (30 aa).

The segment at residues 1–30 (GLPVCGETCFGGTCNTPGCSCDPWPMCSRN) is a cross-link (cyclopeptide (Gly-Asn)). Disulfide bonds link cysteine 5-cysteine 19, cysteine 9-cysteine 21, and cysteine 14-cysteine 27.

Post-translationally, this is a cyclic peptide.

Its function is as follows. Probably participates in a plant defense mechanism. In Viola arvensis (European field pansy), this protein is Varv peptide B.